The following is a 270-amino-acid chain: Imidazoleglycerol-phosphate dehydratase 1, chloroplastic (270 aa).

The transit peptide at Met-1–Cys-62 directs the protein to the chloroplast. At Ser-63 the chain carries N-acetylserine. Substrate-binding positions include Glu-84, His-110–His-118, His-136–Glu-140, Arg-162, and Arg-184. The Mn(2+) site is built by His-110, His-136, His-137, and Glu-140. Residues His-208, His-232, His-233, and Glu-236 each contribute to the Mn(2+) site. Substrate is bound by residues His-232–Lys-240 and Ser-262–Lys-264. Positions Thr-250 to Ser-270 are disordered.

It belongs to the imidazoleglycerol-phosphate dehydratase family. The cofactor is Mn(2+).

The protein localises to the plastid. Its subcellular location is the chloroplast. It carries out the reaction D-erythro-1-(imidazol-4-yl)glycerol 3-phosphate = 3-(imidazol-4-yl)-2-oxopropyl phosphate + H2O. Its pathway is amino-acid biosynthesis; L-histidine biosynthesis; L-histidine from 5-phospho-alpha-D-ribose 1-diphosphate: step 6/9. The sequence is that of Imidazoleglycerol-phosphate dehydratase 1, chloroplastic from Arabidopsis thaliana (Mouse-ear cress).